Here is a 239-residue protein sequence, read N- to C-terminus: uncharacterized protein (239 aa).

The dksA C4-type; degenerate zinc-finger motif lies at 94–114 (CEVSGKEIPFERLEALPTATT). Positions 133–158 (ETPFGQFEFDDDEEIRAPYDSEDSYQ) are enriched in acidic residues. The segment at 133 to 182 (ETPFGQFEFDDDEEIRAPYDSEDSYQDVEKYGNSQTPQDMENPPLSYDDM) is disordered.

This is an uncharacterized protein from Bacillus subtilis (strain 168).